The chain runs to 116 residues: Putative pterin-4-alpha-carbinolamine dehydratase 1 (116 aa).

The protein belongs to the pterin-4-alpha-carbinolamine dehydratase family.

It carries out the reaction (4aS,6R)-4a-hydroxy-L-erythro-5,6,7,8-tetrahydrobiopterin = (6R)-L-erythro-6,7-dihydrobiopterin + H2O. This Gloeobacter violaceus (strain ATCC 29082 / PCC 7421) protein is Putative pterin-4-alpha-carbinolamine dehydratase 1.